A 151-amino-acid chain; its full sequence is Large ribosomal subunit protein bL9 (151 aa).

This sequence belongs to the bacterial ribosomal protein bL9 family.

Functionally, binds to the 23S rRNA. The sequence is that of Large ribosomal subunit protein bL9 from Desulfotalea psychrophila (strain LSv54 / DSM 12343).